The primary structure comprises 674 residues: DNA mismatch repair protein MutL (674 aa).

The protein belongs to the DNA mismatch repair MutL/HexB family.

Its function is as follows. This protein is involved in the repair of mismatches in DNA. It is required for dam-dependent methyl-directed DNA mismatch repair. May act as a 'molecular matchmaker', a protein that promotes the formation of a stable complex between two or more DNA-binding proteins in an ATP-dependent manner without itself being part of a final effector complex. This Clostridium perfringens (strain 13 / Type A) protein is DNA mismatch repair protein MutL.